A 916-amino-acid polypeptide reads, in one-letter code: Chitin synthase B (916 aa).

Disordered stretches follow at residues 1–75 (MAYH…GYSL) and 118–141 (ARSE…GGNG). Over residues 14 to 26 (HTYDDGHQLRDLS) the composition is skewed to basic and acidic residues. Residues 59–75 (RGLTASPVQRPTSGYSL) are compositionally biased toward polar residues. The next 7 membrane-spanning stretches (helical) occupy residues 544–561 (RWLN…MHFG), 588–608 (FLTW…MDLV), 629–649 (IINT…FILA), 664–684 (SFVA…YLVV), 716–736 (IIII…FMYL), 845–865 (LVTL…SEGL), and 884–904 (ALLW…TWFL).

It belongs to the chitin synthase family. Class III subfamily. As to quaternary structure, interacts with kibesin kinA. Activity requires trypsin activation, suggesting a zymogenic nature. Post-translationally, phosphorylated at yet unidentified residues in a N-terminal disordered region-dependent manner.

It localises to the cell membrane. The protein localises to the cell tip. It is found in the cell septum. The catalysed reaction is [(1-&gt;4)-N-acetyl-beta-D-glucosaminyl](n) + UDP-N-acetyl-alpha-D-glucosamine = [(1-&gt;4)-N-acetyl-beta-D-glucosaminyl](n+1) + UDP + H(+). Activity is stimulated by Mg(2+) and is inhibited by polyoxin D. Polymerizes chitin, a structural polymer of the cell wall and septum, by transferring the sugar moiety of UDP-GlcNAc to the non-reducing end of the growing chitin polymer. Does not substantially contribute to the rigidity of the cell wall but is necessary for normal hyphal growth and organization. In addition to its functions in the formation of normal cell walls of hyphae, is also involved in conidiophore and conidia development. This Emericella nidulans (strain FGSC A4 / ATCC 38163 / CBS 112.46 / NRRL 194 / M139) (Aspergillus nidulans) protein is Chitin synthase B.